A 453-amino-acid polypeptide reads, in one-letter code: tRNA-2-methylthio-N(6)-dimethylallyladenosine synthase (453 aa).

The MTTase N-terminal domain occupies 17–135 (GTFFIETWGC…FPEYLNRAKQ (119 aa)). [4Fe-4S] cluster contacts are provided by Cys26, Cys62, Cys96, Cys172, Cys176, and Cys179. One can recognise a Radical SAM core domain in the interval 158-388 (RKSSTKAFVT…VEVVNKSCEK (231 aa)). A TRAM domain is found at 391–453 (KKYQDRIVKV…LSFSLEGEEV (63 aa)).

This sequence belongs to the methylthiotransferase family. MiaB subfamily. As to quaternary structure, monomer. The cofactor is [4Fe-4S] cluster.

It is found in the cytoplasm. The enzyme catalyses N(6)-dimethylallyladenosine(37) in tRNA + (sulfur carrier)-SH + AH2 + 2 S-adenosyl-L-methionine = 2-methylsulfanyl-N(6)-dimethylallyladenosine(37) in tRNA + (sulfur carrier)-H + 5'-deoxyadenosine + L-methionine + A + S-adenosyl-L-homocysteine + 2 H(+). Catalyzes the methylthiolation of N6-(dimethylallyl)adenosine (i(6)A), leading to the formation of 2-methylthio-N6-(dimethylallyl)adenosine (ms(2)i(6)A) at position 37 in tRNAs that read codons beginning with uridine. This is tRNA-2-methylthio-N(6)-dimethylallyladenosine synthase from Clostridium tetani (strain Massachusetts / E88).